A 127-amino-acid chain; its full sequence is uncharacterized protein (127 aa).

A run of 2 helical transmembrane segments spans residues 42-62 and 78-98; these read LLISNFAGLGIAFIYCLIAFI and GLPIILCSTLMLVGNILYYFL.

It is found in the membrane. This is an uncharacterized protein from Schizosaccharomyces pombe (strain 972 / ATCC 24843) (Fission yeast).